Consider the following 495-residue polypeptide: Phosphomethylpyrimidine synthase (495 aa).

Substrate is bound by residues Asn-125, Met-154, Tyr-183, His-219, 239-241 (SRG), 280-283 (DGLR), and Glu-319. His-323 is a binding site for Zn(2+). Position 346 (Tyr-346) interacts with substrate. His-387 serves as a coordination point for Zn(2+). Positions 467, 470, and 475 each coordinate [4Fe-4S] cluster.

The protein belongs to the ThiC family. Requires [4Fe-4S] cluster as cofactor.

The catalysed reaction is 5-amino-1-(5-phospho-beta-D-ribosyl)imidazole + S-adenosyl-L-methionine = 4-amino-2-methyl-5-(phosphooxymethyl)pyrimidine + CO + 5'-deoxyadenosine + formate + L-methionine + 3 H(+). It functions in the pathway cofactor biosynthesis; thiamine diphosphate biosynthesis. In terms of biological role, catalyzes the synthesis of the hydroxymethylpyrimidine phosphate (HMP-P) moiety of thiamine from aminoimidazole ribotide (AIR) in a radical S-adenosyl-L-methionine (SAM)-dependent reaction. The chain is Phosphomethylpyrimidine synthase from Leptospira interrogans serogroup Icterohaemorrhagiae serovar copenhageni (strain Fiocruz L1-130).